The primary structure comprises 205 residues: MYRIKDEWGEFLVRLARKAIEEYVRNGRVIEPPEDTPPELWEKMGVFVTLNRYRAPPQMALRGCIGFPLPIYPLVEATIKAAIHAAVEDPRFPPVRPEELDELTVEVSVLTPPEPIEGPPEERPRKIKVGRDGLIVEKGFYSGLLLPQVPVEWGWDEEEFLAQTCWKAGLPPDCWLDPDTKVYRFTAEIFEEEYPRGPVRRKPLV.

One can recognise an AMMECR1 domain in the interval 7-201 (EWGEFLVRLA…EEYPRGPVRR (195 aa)).

This Thermococcus gammatolerans (strain DSM 15229 / JCM 11827 / EJ3) protein is Protein TGAM_1450.